A 108-amino-acid polypeptide reads, in one-letter code: uncharacterized protein (108 aa).

Residues 10-32 form a helical membrane-spanning segment; that stretch reads LQAPYILCTSFITLKIHNFFFFF.

It localises to the membrane. This is an uncharacterized protein from Saccharomyces cerevisiae (strain ATCC 204508 / S288c) (Baker's yeast).